A 199-amino-acid chain; its full sequence is Small ribosomal subunit protein uS14m (199 aa).

The tract at residues leucine 28 to glutamine 67 is disordered.

Belongs to the universal ribosomal protein uS14 family. Component of the mitochondrial ribosome small subunit (28S) which comprises a 12S rRNA and about 30 distinct proteins. Interacts with LIAT1.

The protein resides in the mitochondrion. This chain is Small ribosomal subunit protein uS14m (mrps-14), found in Caenorhabditis elegans.